Consider the following 312-residue polypeptide: Phospholipid phosphatase 3 (312 aa).

Topologically, residues 1-33 are cytoplasmic; it reads MQSYKYDKAIVPESKNGGSPALNNNPRKGGSKR. Ser-19 bears the Phosphoserine mark. Residues 34 to 54 form a helical membrane-spanning segment; the sequence is VLLICLDLFCLFMAALPFLII. At 55–85 the chain is on the extracellular side; that stretch reads ETSTIKPYRRGFYCNDESIKYPLKVSETIND. Residues 86–106 form a helical membrane-spanning segment; the sequence is AVLCAVGIVIAILRIITGEFY. The Cytoplasmic portion of the chain corresponds to 107-123; that stretch reads RIYYLKEKSRSTIQNPY. The short motif at 109 to 110 is the Dityrosine basolateral targeting motif element; the sequence is YY. A helical transmembrane segment spans residues 124–144; the sequence is VAALYKQVGCFLFGCAISQSF. Residues 145 to 194 are Extracellular-facing; it reads TDIAKVSIGRLRPHFLSVCDPDFSQINCSEGYIQNYRCRGEDSKVQEARK. The segment at 149-157 is phosphatase sequence motif I; it reads KVSIGRLRP. N-linked (GlcNAc...) asparagine glycosylation occurs at Asn-171. The Integrin-binding motif motif lies at 183 to 185; it reads RGE. A helical transmembrane segment spans residues 195-215; sequence SFFSGHASFSMFTMLYLVLYL. Positions 197-200 are phosphatase sequence motif II; sequence FSGH. His-200 (proton donors) is an active-site residue. The Cytoplasmic segment spans residues 216–226; that stretch reads QARFTWRGARL. The chain crosses the membrane as a helical span at residues 227-244; it reads LRPLLQFTLLMMAFYTGL. The segment at 245–256 is phosphatase sequence motif III; the sequence is SRVSDYKHHPSD. The Extracellular segment spans residues 245–258; sequence SRVSDYKHHPSDVL. His-252 serves as the catalytic Nucleophile. The chain crosses the membrane as a helical span at residues 259–279; sequence AGFAQGALVACCIVFFVSDLF. The tract at residues 276–312 is mediates interaction with CTNND1; it reads SDLFKTKTTLSLPAPAIRREILSPVDIMDRSNHHNMV. Residues 280-312 lie on the Cytoplasmic side of the membrane; sequence KTKTTLSLPAPAIRREILSPVDIMDRSNHHNMV.

It belongs to the PA-phosphatase related phosphoesterase family. Forms functional homodimers and homooligomers that are not required for substrate recognition and catalytic activity. Can also form heterooligomers with other PLPP2 and PLPP3. Interacts with CTNND1; negatively regulates the PLPP3-mediated stabilization of beta-catenin/CTNNB1. N-glycosylated. Contains high-mannose oligosaccharides. As to expression, detected in epithelial cells of intestinal mucosa, lung, liver and brain.

It localises to the cell membrane. Its subcellular location is the basolateral cell membrane. It is found in the endoplasmic reticulum membrane. The protein resides in the endoplasmic reticulum-Golgi intermediate compartment membrane. The protein localises to the golgi apparatus membrane. It localises to the golgi apparatus. Its subcellular location is the trans-Golgi network membrane. It is found in the membrane raft. The catalysed reaction is a 1,2-diacyl-sn-glycero-3-phosphate + H2O = a 1,2-diacyl-sn-glycerol + phosphate. It catalyses the reaction 1,2-dihexadecanoyl-sn-glycero-3-phosphate + H2O = 1,2-dihexadecanoyl-sn-glycerol + phosphate. The enzyme catalyses 1,2-di-(9Z-octadecenoyl)-sn-glycero-3-phosphate + H2O = 1,2-di-(9Z-octadecenoyl)-sn-glycerol + phosphate. It carries out the reaction a monoacyl-sn-glycero-3-phosphate + H2O = a monoacylglycerol + phosphate. The catalysed reaction is (9Z)-octadecenoyl-sn-glycero-3-phosphate + H2O = (9Z-octadecenoyl)-glycerol + phosphate. It catalyses the reaction sphing-4-enine 1-phosphate + H2O = sphing-4-enine + phosphate. The enzyme catalyses an N-acylsphing-4-enine 1-phosphate + H2O = an N-acylsphing-4-enine + phosphate. It carries out the reaction N-(octanoyl)-sphing-4-enine-1-phosphate + H2O = N-octanoylsphing-4-enine + phosphate. The catalysed reaction is N-(9Z-octadecenoyl)-ethanolamine phosphate + H2O = N-(9Z-octadecenoyl) ethanolamine + phosphate. Its pathway is lipid metabolism; phospholipid metabolism. Its activity is regulated as follows. Magnesium-independent phospholipid phosphatase. Insensitive to N-ethylmaleimide. Inhibited by sphingosine, zinc ions and modestly by propanolol. In terms of biological role, magnesium-independent phospholipid phosphatase of the plasma membrane that catalyzes the dephosphorylation of a variety of glycerolipid and sphingolipid phosphate esters including phosphatidate/PA, lysophosphatidate/LPA, diacylglycerol pyrophosphate/DGPP, sphingosine 1-phosphate/S1P and ceramide 1-phosphate/C1P. Also acts on N-oleoyl ethanolamine phosphate/N-(9Z-octadecenoyl)-ethanolamine phosphate, a potential physiological compound. Has both an extracellular and an intracellular phosphatase activity, allowing the hydrolysis and the cellular uptake of these bioactive lipid mediators from the milieu, regulating signal transduction in different cellular processes. Through the dephosphorylation of extracellular sphingosine-1-phosphate and the regulation of its extra- and intracellular availability, plays a role in vascular homeostasis, regulating endothelial cell migration, adhesion, survival, proliferation and the production of pro-inflammatory cytokines. By maintaining the appropriate levels of this lipid in the cerebellum, also ensure its proper development and function. Through its intracellular lipid phosphatase activity may act in early compartments of the secretory pathway, regulating the formation of Golgi to endoplasmic reticulum retrograde transport carriers. Functionally, independently of this phosphatase activity may also function in the Wnt signaling pathway and the stabilization of beta-catenin/CTNNB1, thereby regulating cell proliferation, migration and differentiation in angiogenesis or yet in tumor growth. Also plays a role in integrin-mediated cell-cell adhesion in angiogenesis. The sequence is that of Phospholipid phosphatase 3 from Rattus norvegicus (Rat).